The primary structure comprises 134 residues: Acyl carrier protein SF2, chloroplastic (134 aa).

Residues 1 to 51 (MSTTFCSSVSMQATSLAATTRISFQKPALVSTTNLSFNLRRSIPTRFSISC) constitute a chloroplast transit peptide. One can recognise a Carrier domain in the interval 55–130 (PETVEKVSKI…EAAELIEELV (76 aa)). An O-(pantetheine 4'-phosphoryl)serine modification is found at Ser90.

Belongs to the acyl carrier protein (ACP) family. In terms of processing, 4'-phosphopantetheine is transferred from CoA to a specific serine of apo-ACP by acpS. This modification is essential for activity because fatty acids are bound in thioester linkage to the sulfhydryl of the prosthetic group.

The protein localises to the plastid. Its subcellular location is the chloroplast. It participates in lipid metabolism; fatty acid biosynthesis. In terms of biological role, carrier of the growing fatty acid chain in fatty acid biosynthesis. In Brassica campestris (Field mustard), this protein is Acyl carrier protein SF2, chloroplastic (Acl1.1).